A 293-amino-acid chain; its full sequence is Cyclohexadienyl dehydrogenase (293 aa).

One can recognise a Prephenate/arogenate dehydrogenase domain in the interval 5 to 293 (KHIAIIGLGL…ALKTDHDIRP (289 aa)). NAD(+) is bound at residue 6-30 (HIAIIGLGLIGSSAARATKAYCPDV).

The protein belongs to the prephenate/arogenate dehydrogenase family. Homodimer.

The catalysed reaction is L-arogenate + NAD(+) = L-tyrosine + CO2 + NADH. It catalyses the reaction prephenate + NAD(+) = 3-(4-hydroxyphenyl)pyruvate + CO2 + NADH. Its pathway is amino-acid biosynthesis; L-tyrosine biosynthesis; (4-hydroxyphenyl)pyruvate from prephenate (NAD(+) route): step 1/1. It participates in amino-acid biosynthesis; L-tyrosine biosynthesis; L-tyrosine from L-arogenate (NAD(+) route): step 1/1. With respect to regulation, insensitive to feedback inhibition by L-tyrosine. Can function as either prephenate dehydrogenase or as arogenate dehydrogenase in the biosynthesis of L-tyrosine. Catalyzes two analogous reactions: converts prephenate to 4-hydroxyphenylpyruvate and transforms L-arogenate to L-tyrosine. Is not able to utilize NADP(+) instead of NAD(+) as cosubstrate. The polypeptide is Cyclohexadienyl dehydrogenase (Zymomonas mobilis subsp. mobilis (strain ATCC 31821 / ZM4 / CP4)).